The sequence spans 146 residues: Ribonuclease H (146 aa).

An RNase H type-1 domain is found at 1-143 (MQKKVTIYTD…CDYLATQAIK (143 aa)). Mg(2+) contacts are provided by Asp-10, Glu-48, Asp-70, and Asp-135.

Belongs to the RNase H family. As to quaternary structure, monomer. Mg(2+) is required as a cofactor.

It localises to the cytoplasm. The catalysed reaction is Endonucleolytic cleavage to 5'-phosphomonoester.. In terms of biological role, endonuclease that specifically degrades the RNA of RNA-DNA hybrids. The chain is Ribonuclease H from Chlorobium phaeobacteroides (strain BS1).